We begin with the raw amino-acid sequence, 665 residues long: UvrABC system protein C (665 aa).

Residues 16–95 (ESPGVYRFRD…IKQYDPRFNV (80 aa)) enclose the GIY-YIG domain. The UVR domain maps to 208–243 (DLMVRRLEREMADASAELEFERAARLRDDLAALRRA). The interval 470–507 (EAGVESAGDPATPAGPASTGPGVPDEPRVGTLVDPTTG) is disordered. The span at 475–491 (SAGDPATPAGPASTGPG) shows a compositional bias: low complexity.

This sequence belongs to the UvrC family. In terms of assembly, interacts with UvrB in an incision complex.

The protein resides in the cytoplasm. In terms of biological role, the UvrABC repair system catalyzes the recognition and processing of DNA lesions. UvrC both incises the 5' and 3' sides of the lesion. The N-terminal half is responsible for the 3' incision and the C-terminal half is responsible for the 5' incision. This chain is UvrABC system protein C, found in Salinispora tropica (strain ATCC BAA-916 / DSM 44818 / JCM 13857 / NBRC 105044 / CNB-440).